The following is a 313-amino-acid chain: D-alanine--D-alanine ligase (313 aa).

Positions 108-308 (KLVWQQTGVP…YSELVVKVLA (201 aa)) constitute an ATP-grasp domain. 138-193 (VAKLGLPLFVKPASEGSSVAVLKVKTADALPAALSEAATHDKIVIVEKSIEGGGEY) contributes to the ATP binding site. Mg(2+) is bound by residues Asp262, Glu275, and Asn277.

Belongs to the D-alanine--D-alanine ligase family. Requires Mg(2+) as cofactor. The cofactor is Mn(2+).

Its subcellular location is the cytoplasm. It catalyses the reaction 2 D-alanine + ATP = D-alanyl-D-alanine + ADP + phosphate + H(+). The protein operates within cell wall biogenesis; peptidoglycan biosynthesis. In terms of biological role, cell wall formation. The polypeptide is D-alanine--D-alanine ligase (Burkholderia ambifaria (strain ATCC BAA-244 / DSM 16087 / CCUG 44356 / LMG 19182 / AMMD) (Burkholderia cepacia (strain AMMD))).